Here is a 131-residue protein sequence, read N- to C-terminus: Small ribosomal subunit protein uS11 (131 aa).

This sequence belongs to the universal ribosomal protein uS11 family. Part of the 30S ribosomal subunit. Interacts with proteins S7 and S18. Binds to IF-3.

Located on the platform of the 30S subunit, it bridges several disparate RNA helices of the 16S rRNA. Forms part of the Shine-Dalgarno cleft in the 70S ribosome. The sequence is that of Small ribosomal subunit protein uS11 from Helicobacter pylori (strain ATCC 700392 / 26695) (Campylobacter pylori).